We begin with the raw amino-acid sequence, 428 residues long: Adenosylmethionine-8-amino-7-oxononanoate aminotransferase (428 aa).

Substrate is bound at residue W52. 112 to 113 serves as a coordination point for pyridoxal 5'-phosphate; that stretch reads GS. Position 144 (Y144) interacts with substrate. Pyridoxal 5'-phosphate is bound at residue D245. Residues K274 and G307 each contribute to the substrate site. K274 is subject to N6-(pyridoxal phosphate)lysine. Residue 308–309 participates in pyridoxal 5'-phosphate binding; the sequence is PT. Residue R391 coordinates substrate.

It belongs to the class-III pyridoxal-phosphate-dependent aminotransferase family. BioA subfamily. Homodimer. Requires pyridoxal 5'-phosphate as cofactor.

The protein localises to the cytoplasm. The enzyme catalyses (8S)-8-amino-7-oxononanoate + S-adenosyl-L-methionine = S-adenosyl-4-methylsulfanyl-2-oxobutanoate + (7R,8S)-7,8-diammoniononanoate. It participates in cofactor biosynthesis; biotin biosynthesis; 7,8-diaminononanoate from 8-amino-7-oxononanoate (SAM route): step 1/1. Functionally, catalyzes the transfer of the alpha-amino group from S-adenosyl-L-methionine (SAM) to 7-keto-8-aminopelargonic acid (KAPA) to form 7,8-diaminopelargonic acid (DAPA). It is the only aminotransferase known to utilize SAM as an amino donor. The protein is Adenosylmethionine-8-amino-7-oxononanoate aminotransferase of Buchnera aphidicola subsp. Acyrthosiphon pisum (strain APS) (Acyrthosiphon pisum symbiotic bacterium).